We begin with the raw amino-acid sequence, 337 residues long: Cytoskeleton protein RodZ (337 aa).

At methionine 1–glycine 111 the chain is on the cytoplasmic side. The HTH cro/C1-type domain occupies leucine 19–leucine 71. A DNA-binding region (H-T-H motif) is located at residues glutamine 30–glutamate 49. A helical; Signal-anchor for type II membrane protein membrane pass occupies residues tryptophan 112–tryptophan 132. Residues tryptophan 133 to glutamine 337 are Periplasmic-facing. The segment covering threonine 145 to asparagine 167 has biased composition (polar residues). A disordered region spans residues threonine 145–alanine 236. Residues threonine 168–glutamine 207 show a composition bias toward low complexity. Polar residues predominate over residues asparagine 208–valine 218. The span at aspartate 219–alanine 236 shows a compositional bias: low complexity.

It belongs to the RodZ family.

It is found in the cell inner membrane. Its function is as follows. Cytoskeletal protein that is involved in cell-shape control through regulation of the length of the long axis. This chain is Cytoskeleton protein RodZ, found in Escherichia coli O157:H7.